The sequence spans 653 residues: Endoglin (653 aa).

Residues 1–24 form the signal peptide; sequence MDRGVLPQAIALLLAVCSFGPTAG. The Extracellular portion of the chain corresponds to 25–581; the sequence is LAEGVQCDLQ…IVSPGLPDKG (557 aa). The tract at residues 27–44 is OR1, N-terminal part; that stretch reads EGVQCDLQPVDPKVTYTT. Residues 27–336 form a required for interaction with GDF2 region; sequence EGVQCDLQPV…RSCGSGLQPS (310 aa). Cystine bridges form between Cys-31-Cys-206, Cys-51-Cys-181, Cys-241-Cys-329, Cys-349-Cys-381, Cys-362-Cys-442, Cys-393-Cys-411, and Cys-493-Cys-549. Residues 45–198 are OR2; the sequence is SQVSEGCVAH…MGHTLEWKSH (154 aa). An N-linked (GlcNAc...) asparagine glycan is attached at Asn-57. Positions 199-329 are OR1, C-terminal part; sequence TQASVLGCHL…SVISLQDRSC (131 aa). The tract at residues 269–281 is essential for interaction with GDF2; sequence KAWTTGEYSFKIF. Residue Asn-306 is glycosylated (N-linked (GlcNAc...) asparagine). The ZP domain occupies 362 to 512; it reads CSDDVMTLVL…MVDLIQNQEA (151 aa). Residues 582–606 form a helical membrane-spanning segment; that stretch reads LVLPAVLGITFGAFLIGALLTAALW. The Cytoplasmic segment spans residues 607–653; that stretch reads YIHSHTRHPGKREPVVAVAAPASSESSSTNHSIGSTQSTPCSTSSMA. Positions 625–634 are enriched in low complexity; it reads AAPASSESSS. Positions 625–653 are disordered; sequence AAPASSESSSTNHSIGSTQSTPCSTSSMA. The segment covering 635 to 653 has biased composition (polar residues); the sequence is TNHSIGSTQSTPCSTSSMA. Residues Ser-641 and Ser-644 each carry the phosphoserine; by TGFBR1 modification.

As to quaternary structure, homodimer; disulfide-linked. Forms a heteromeric complex with the signaling receptors for transforming growth factor-beta: TGFBR1 and/or TGFBR2. It is able to bind TGFB1 and TGFB2 with high affinity, but not TGFB3. Interacts with GDF2, forming a heterotetramer with a 2:2 stoichiometry. Interacts with ACVRL1. Can form a heteromeric complex with GDF2 and ACVRL1. Interacts with BMP10. Interacts with DYNLT4. Interacts with ARRB2.

It localises to the cell membrane. Vascular endothelium glycoprotein that plays an important role in the regulation of angiogenesis. Required for normal structure and integrity of adult vasculature. Regulates the migration of vascular endothelial cells. Required for normal extraembryonic angiogenesis and for embryonic heart development. May regulate endothelial cell shape changes in response to blood flow, which drive vascular remodeling and establishment of normal vascular morphology during angiogenesis. May play a role in the binding of endothelial cells to integrins. Acts as a TGF-beta coreceptor and is involved in the TGF-beta/BMP signaling cascade that ultimately leads to the activation of SMAD transcription factors. Required for GDF2/BMP9 signaling through SMAD1 in endothelial cells and modulates TGFB1 signaling through SMAD3. This is Endoglin (ENG) from Sus scrofa (Pig).